The chain runs to 226 residues: tRNA (guanine-N(1)-)-methyltransferase (226 aa).

Residues G110 and 129–134 (IGDYIL) each bind S-adenosyl-L-methionine.

It belongs to the RNA methyltransferase TrmD family. In terms of assembly, homodimer.

It localises to the cytoplasm. The catalysed reaction is guanosine(37) in tRNA + S-adenosyl-L-methionine = N(1)-methylguanosine(37) in tRNA + S-adenosyl-L-homocysteine + H(+). Its function is as follows. Specifically methylates guanosine-37 in various tRNAs. The sequence is that of tRNA (guanine-N(1)-)-methyltransferase from Malacoplasma penetrans (strain HF-2) (Mycoplasma penetrans).